Reading from the N-terminus, the 307-residue chain is Myeloid-associated differentiation marker-like protein 2 (307 aa).

2 consecutive MARVEL domains span residues 17-154 (AVTS…ARPG) and 159-303 (YMAT…RIRF). Helical transmembrane passes span 53-73 (FCVA…ACEF), 90-110 (AFAM…PLYF), 129-149 (LAAS…VALT), 163-183 (VSGL…GALV), 198-218 (VAVY…SVLG), 232-252 (VVYT…WPVF), and 278-298 (LVVA…LAYS).

It belongs to the MAL family.

It localises to the membrane. In Bos taurus (Bovine), this protein is Myeloid-associated differentiation marker-like protein 2 (MYADML2).